The following is a 160-amino-acid chain: Nucleotide-binding protein VFMJ11_1323 (160 aa).

The protein belongs to the YajQ family.

Nucleotide-binding protein. The sequence is that of Nucleotide-binding protein VFMJ11_1323 from Aliivibrio fischeri (strain MJ11) (Vibrio fischeri).